The chain runs to 437 residues: C-terminal-binding protein 2 (437 aa).

Residues serine 103, 183 to 188 (IGLGRI), aspartate 207, 240 to 246 (CNLNEHN), 267 to 269 (TAR), and aspartate 293 each bind NAD(+). The active site involves arginine 269. Residue glutamate 298 is part of the active site. The active-site Proton donor is the histidine 318. 318–321 (HTAW) provides a ligand contact to NAD(+). The tract at residues 410–437 (PLIPSVSHTPSPGQTTKPDPDREIPTDQ) is disordered. The span at 415-426 (VSHTPSPGQTTK) shows a compositional bias: polar residues. Residues 427–437 (PDPDREIPTDQ) are compositionally biased toward basic and acidic residues.

This sequence belongs to the D-isomer specific 2-hydroxyacid dehydrogenase family. Interacts with the C-terminus of tcf7l1-a via the consensus motifs P-X-[DNS]-L-[STVA].

The protein resides in the nucleus. In terms of biological role, corepressor targeting diverse transcription regulators. The sequence is that of C-terminal-binding protein 2 (ctbp2) from Xenopus laevis (African clawed frog).